A 271-amino-acid chain; its full sequence is Magnetosome protein MamX (271 aa).

Over 1-10 (MSSKAVAHPN) the chain is Cytoplasmic. The chain crosses the membrane as a helical span at residues 11-31 (IAVWIMALGIAFSMALVLTAV). The Lumenal portion of the chain corresponds to 32–271 (FNANPWEDHT…NAGGMDAEER (240 aa)). Positions 48–71 (IVAGMPAPHRDGREKMVCSSCHIV) match the MCR (magnetochrome) 1 motif. Residues C65, C68, H69, C104, C107, and H108 each contribute to the heme site. The short motif at 87 to 110 (IVQGTPAPHVDGREKMPCASCHTI) is the MCR 2 element.

Belongs to the magnetosome MamX family. It depends on heme as a cofactor.

Its subcellular location is the magnetosome membrane. In terms of biological role, required for correct biomineralization of the magnetosome, may be involved in redox control of biomineralization. May function with MamY, MamZ amd Mms6. The chain is Magnetosome protein MamX (mamX) from Paramagnetospirillum magneticum (strain ATCC 700264 / AMB-1) (Magnetospirillum magneticum).